The primary structure comprises 324 residues: Pancreas transcription factor 1 subunit alpha (324 aa).

A bHLH domain is found at 160 to 212 (QLRQAANVRERRRMQSINDAFEGLRSHIPTLPYEKRLSKVDTLRLAIGYINFL). Residues 302 to 324 (DPRKLNSKSFDNIENEPPFEFVS) are disordered.

As to quaternary structure, component of the pancreas transcription factor 1 complex (PTF1) which is composed of TCF3/p75, TCF12/p64 and PTF1A/p48. TCF3 is responsible for the nuclear import of the p48/p64 complex. Interacts with TCF3 and RBPSUH/RBP-Jkappa. In terms of tissue distribution, expressed in precursors of pancreatic islets, acini and ducts.

The protein resides in the nucleus. The protein localises to the cytoplasm. Functionally, transcription factor implicated in the cell fate determination in various organs. Binds to the E-box consensus sequence 5'-CANNTG-3'. Plays a role in early and late pancreas development and differentiation. Important for determining whether cells allocated to the pancreatic buds continue towards pancreatic organogenesis or revert back to duodenal fates. May be involved in the maintenance of exocrine pancreas-specific gene expression including ELA1 and amylase. Required for the formation of pancreatic acinar and ductal cells. Plays an important role in cerebellar development. Directly regulated by FOXN4 and RORC during retinal development, FOXN4-PTF1A pathway plays a central role in directing the differentiation of retinal progenitors towards horizontal and amacrine fates. In Mus musculus (Mouse), this protein is Pancreas transcription factor 1 subunit alpha (Ptf1a).